The chain runs to 1053 residues: Focal adhesion kinase 1 (1053 aa).

Residues 1–27 are disordered; the sequence is MAAAYLDPNLNHTPSSSAKTHLGTGME. Over residues 10–19 the composition is skewed to polar residues; that stretch reads LNHTPSSSAK. Positions 35-355 constitute an FERM domain; sequence RVLKVFHYFE…GYCRLVNGAT (321 aa). Y397 carries the post-translational modification Phosphotyrosine; by autocatalysis. Y407 is subject to Phosphotyrosine. The Protein kinase domain occupies 422 to 680; the sequence is IELGRCIGEG…ELKAQLSTIL (259 aa). Residues 428-434, K454, and 500-502 contribute to the ATP site; these read IGEGQFG and ELC. D546 serves as the catalytic Proton acceptor. Y576 and Y577 each carry phosphotyrosine; by SRC. The span at 686 to 697 shows a compositional bias: basic and acidic residues; it reads QQEERMRMESRR. 2 disordered regions span residues 686 to 741 and 843 to 892; these read QQEE…QPNH and RGSI…LASL. At Y863 the chain carries Phosphotyrosine. S911 is modified (phosphoserine). The residue at position 926 (Y926) is a Phosphotyrosine.

The protein belongs to the protein kinase superfamily. Tyr protein kinase family. FAK subfamily. In terms of assembly, interacts with ARHGAP26, GRB7, DCC, PIK3R1, PXN and SRC. Interacts with the ARP2/3 complex. Post-translationally, phosphorylated on tyrosine residues upon activation, e.g. upon integrin signaling. Tyr-397 is the major autophosphorylation site, but other kinases can also phosphorylate this residue. Phosphorylation at Tyr-397 promotes interaction with SRC and SRC family members, leading to phosphorylation at Tyr-576, Tyr-577 and at additional tyrosine residues. Isoform 2 is phosphorylated on serine or threonine residues, but apparently not on tyrosine residues.

It localises to the cell junction. It is found in the focal adhesion. The protein resides in the cell membrane. The protein localises to the cytoplasm. Its subcellular location is the perinuclear region. It localises to the cell cortex. It is found in the cytoskeleton. The protein resides in the microtubule organizing center. The protein localises to the centrosome. Its subcellular location is the nucleus. It localises to the cilium basal body. It catalyses the reaction L-tyrosyl-[protein] + ATP = O-phospho-L-tyrosyl-[protein] + ADP + H(+). Its activity is regulated as follows. Subject to autoinhibition, mediated by interactions between the FERM domain and the kinase domain. Activated by autophosphorylation at Tyr-397. This promotes interaction with SRC and phosphorylation at Tyr-576 and Tyr-577 in the kinase activation loop. Phosphorylation at Tyr-576 and Tyr-577 is required for maximal kinase activity. Inhibited by TAE226. Its function is as follows. Non-receptor protein-tyrosine kinase that plays an essential role in regulating cell migration, adhesion, spreading, reorganization of the actin cytoskeleton, formation and disassembly of focal adhesions and cell protrusions, cell cycle progression, cell proliferation and apoptosis. Required for early embryonic development, embryonic angiogenesis, normal cardiomyocyte migration and proliferation, and normal heart development. Regulates axon growth and neuronal cell migration, axon branching and synapse formation; required for normal development of the nervous system. Plays a role in osteogenesis and differentiation of osteoblasts. Functions in integrin signal transduction, but also in signaling downstream of numerous growth factor receptors, G-protein coupled receptors (GPCR), ephrin receptors, netrin receptors and LDL receptors. Forms multisubunit signaling complexes with SRC and SRC family members upon activation; this leads to the phosphorylation of additional tyrosine residues, creating binding sites for scaffold proteins, effectors and substrates. Regulates numerous signaling pathways. Promotes activation of phosphatidylinositol 3-kinase and the AKT1 signaling cascade. Promotes activation of MAPK1/ERK2, MAPK3/ERK1 and the MAP kinase signaling cascade. Promotes localized and transient activation of guanine nucleotide exchange factors (GEFs) and GTPase-activating proteins (GAPs), and thereby modulates the activity of Rho family GTPases. Signaling via CAS family members mediates activation of RAC1. Regulates P53/TP53 activity and stability. Phosphorylates SRC; this increases SRC kinase activity. Isoform 2 (FRNK) does not contain a kinase domain and inhibits PTK2/FAK1 phosphorylation and signaling. The sequence is that of Focal adhesion kinase 1 (PTK2) from Gallus gallus (Chicken).